Consider the following 348-residue polypeptide: Dihydroorotase (348 aa).

Residues H17 and H19 each coordinate Zn(2+). Substrate-binding positions include 19–21 (HLR) and N45. 3 residues coordinate Zn(2+): K103, H140, and H178. K103 bears the N6-carboxylysine mark. H140 is a binding site for substrate. L223 contacts substrate. D251 is a Zn(2+) binding site. D251 is an active-site residue. Residues H255 and A267 each contribute to the substrate site.

Belongs to the metallo-dependent hydrolases superfamily. DHOase family. Class II DHOase subfamily. Homodimer. Requires Zn(2+) as cofactor.

It carries out the reaction (S)-dihydroorotate + H2O = N-carbamoyl-L-aspartate + H(+). It participates in pyrimidine metabolism; UMP biosynthesis via de novo pathway; (S)-dihydroorotate from bicarbonate: step 3/3. Its function is as follows. Catalyzes the reversible cyclization of carbamoyl aspartate to dihydroorotate. This is Dihydroorotase from Salmonella dublin (strain CT_02021853).